The sequence spans 352 residues: tRNA pseudouridine synthase D (352 aa).

The active-site Nucleophile is D81. One can recognise a TRUD domain in the interval 157-303; the sequence is GIPNYFGAQR…MEHERRILRL (147 aa).

It belongs to the pseudouridine synthase TruD family.

The catalysed reaction is uridine(13) in tRNA = pseudouridine(13) in tRNA. In terms of biological role, responsible for synthesis of pseudouridine from uracil-13 in transfer RNAs. This is tRNA pseudouridine synthase D from Pseudomonas syringae pv. syringae (strain B728a).